A 331-amino-acid chain; its full sequence is Elongation factor Ts, mitochondrial (331 aa).

Positions 254–295 (SPLTVGEMPEVREEEGEKKDGDKQDEEERSTDSDEDETQMLR) are disordered. A compositionally biased stretch (basic and acidic residues) spans 262-275 (PEVREEEGEKKDGD). Over residues 276–291 (KQDEEERSTDSDEDET) the composition is skewed to acidic residues.

This sequence belongs to the EF-Ts family.

It is found in the mitochondrion. Functionally, associates with the EF-Tu.GDP complex and induces the exchange of GDP to GTP. It remains bound to the aminoacyl-tRNA.EF-Tu.GTP complex up to the GTP hydrolysis stage on the ribosome. This Branchiostoma floridae (Florida lancelet) protein is Elongation factor Ts, mitochondrial.